We begin with the raw amino-acid sequence, 1159 residues long: RNA-directed RNA polymerase (1159 aa).

A RdRp catalytic domain is found at 545–727 (LTYGVLAEDT…KALASYTGLE (183 aa)).

Belongs to the reoviridae RNA-directed RNA polymerase family. As to quaternary structure, interacts with VP3 (Potential). Interacts with VP2 (Potential). Interacts with NSP5; this interaction is probably necessary for the formation of functional virus factories.

Its subcellular location is the virion. It catalyses the reaction RNA(n) + a ribonucleoside 5'-triphosphate = RNA(n+1) + diphosphate. Functionally, RNA-directed RNA polymerase that is involved in both transcription and genome replication. Together with VP3 capping enzyme, forms an enzyme complex positioned near the channels situated at each of the five-fold vertices of the core. Following infection, the outermost layer of the virus is lost, leaving a double-layered particle (DLP) made up of the core and VP6 shell. VP1 then catalyzes the transcription of fully conservative plus-strand genomic RNAs that are extruded through the DLP's channels into the cytoplasm where they function as mRNAs for translation of viral proteins. One copy of each of the viral (+)RNAs is also recruited during core assembly, together with newly synthesized polymerase complexes and VP2. The polymerase of these novo-formed particles catalyzes the synthesis of complementary minus-strands leading to dsDNA formation. To do so, the polymerase specifically recognizes conserved 3' sequence(s) in plus-strand RNA templates. Once dsRNA synthesis is complete, the polymerase switches to the transcriptional mode, thus providing secondary transcription. The sequence is that of RNA-directed RNA polymerase from Homo sapiens (Human).